Reading from the N-terminus, the 203-residue chain is Peptide deformylase (203 aa).

Positions 121 and 163 each coordinate Fe cation. Glu-164 is an active-site residue. His-167 serves as a coordination point for Fe cation.

This sequence belongs to the polypeptide deformylase family. The cofactor is Fe(2+).

The enzyme catalyses N-terminal N-formyl-L-methionyl-[peptide] + H2O = N-terminal L-methionyl-[peptide] + formate. Functionally, removes the formyl group from the N-terminal Met of newly synthesized proteins. Requires at least a dipeptide for an efficient rate of reaction. N-terminal L-methionine is a prerequisite for activity but the enzyme has broad specificity at other positions. The chain is Peptide deformylase from Prochlorococcus marinus (strain MIT 9515).